The primary structure comprises 313 residues: MKKRLLIIVGPTAVGKTDTSIILAKELNGEIISADSMQIYRYMDIGTAKPNEEEKKGIPHHLIDIVNPDEEFSVAEFQKIAKNHINRLIEDEKLPIVAGGTGLYINSLIYDMDFTQSISNWELRGALEAEAREKGNEYVYNKLKQIDPHAAARIHPNNLKKVIRAIEVYEETGEKIGDFSTDLNINQEYDVFFVGLTRDREELYDRINMRVDAMIEQGLIEEVKNLLSLGYDKNLIAFKGLGYKEIIGYLEGAYSLEEAMDILKRDTRRYAKRQLTWFRRYENIHWYNLSNYDSCENLAECILKDFKGHFNSL.

Position 10–17 (10–17) interacts with ATP; the sequence is GPTAVGKT. Substrate is bound at residue 12 to 17; that stretch reads TAVGKT. Residues 35 to 38 form an interaction with substrate tRNA region; that stretch reads DSMQ.

The protein belongs to the IPP transferase family. Monomer. The cofactor is Mg(2+).

The catalysed reaction is adenosine(37) in tRNA + dimethylallyl diphosphate = N(6)-dimethylallyladenosine(37) in tRNA + diphosphate. Functionally, catalyzes the transfer of a dimethylallyl group onto the adenine at position 37 in tRNAs that read codons beginning with uridine, leading to the formation of N6-(dimethylallyl)adenosine (i(6)A). The chain is tRNA dimethylallyltransferase from Alkaliphilus oremlandii (strain OhILAs) (Clostridium oremlandii (strain OhILAs)).